The primary structure comprises 1029 residues: FYVE, RhoGEF and PH domain-containing protein tag-77 (1029 aa).

Composition is skewed to basic and acidic residues over residues 1 to 12 (MKYDMNHRKNSD) and 20 to 39 (TVKE…DNRF). 3 disordered regions span residues 1 to 155 (MKYD…ATSE), 185 to 254 (VPRM…ERKT), and 279 to 370 (NNGV…EKDD). Pro residues predominate over residues 42–56 (QPPPPPSPRRAPPPP). Low complexity-rich tracts occupy residues 76–85 (PPSSSESSEN) and 122–133 (SSSTSDVSSQNS). 2 stretches are compositionally biased toward polar residues: residues 141–155 (SCTT…ATSE) and 200–211 (PISQVSTLSQVS). The segment covering 212–227 (DEFDEGDTSASDEESM) has biased composition (acidic residues). The span at 316-334 (SPTSGMSSSSTDDFSRITS) shows a compositional bias: low complexity. The span at 335-347 (MTSDRSSILTSHS) shows a compositional bias: polar residues. The DH domain occupies 375–572 (KLHYAAVEFL…ENVTQAVNQK (198 aa)). Residues 593–696 (NVLEPGRVLI…WTDDLTKAQY (104 aa)) enclose the PH domain. The Zn(2+) site is built by Cys-810, Cys-823, Cys-826, Cys-831, Cys-834, Cys-851, and Cys-854. An FYVE-type; degenerate zinc finger spans residues 810–859 (CSTEFNIINRRHHCRDCGWLICKFCKGQAPLSKYDFTKQNVCSECFDRHY).

Its subcellular location is the cytoplasm. The protein localises to the cytoskeleton. Its function is as follows. Activates cdc-42, a member of the Ras-like family of Rho- and Rac proteins, by exchanging bound GDP for free GTP. May play a role in regulating the actin cytoskeleton and cell shape. Required for normal lifespan. The sequence is that of FYVE, RhoGEF and PH domain-containing protein tag-77 from Caenorhabditis elegans.